Consider the following 451-residue polypeptide: uncharacterized protein (451 aa).

The protein to ORF5 in pFZ1.

This is an uncharacterized protein from Methanothermobacter thermautotrophicus (Methanobacterium thermoformicicum).